The primary structure comprises 183 residues: Large ribosomal subunit protein uL10 (183 aa).

Belongs to the universal ribosomal protein uL10 family. As to quaternary structure, part of the ribosomal stalk of the 50S ribosomal subunit. The N-terminus interacts with L11 and the large rRNA to form the base of the stalk. The C-terminus forms an elongated spine to which L12 dimers bind in a sequential fashion forming a multimeric L10(L12)X complex.

Forms part of the ribosomal stalk, playing a central role in the interaction of the ribosome with GTP-bound translation factors. The sequence is that of Large ribosomal subunit protein uL10 from Mesomycoplasma hyopneumoniae (strain 7448) (Mycoplasma hyopneumoniae).